Reading from the N-terminus, the 624-residue chain is 1-deoxy-D-xylulose-5-phosphate synthase (624 aa).

Thiamine diphosphate is bound by residues histidine 80 and 121-123 (GHS). Residue aspartate 152 coordinates Mg(2+). Residues 153 to 154 (GA), asparagine 181, tyrosine 288, and glutamate 370 contribute to the thiamine diphosphate site. Residue asparagine 181 participates in Mg(2+) binding.

The protein belongs to the transketolase family. DXPS subfamily. As to quaternary structure, homodimer. Mg(2+) is required as a cofactor. Requires thiamine diphosphate as cofactor.

It carries out the reaction D-glyceraldehyde 3-phosphate + pyruvate + H(+) = 1-deoxy-D-xylulose 5-phosphate + CO2. The protein operates within metabolic intermediate biosynthesis; 1-deoxy-D-xylulose 5-phosphate biosynthesis; 1-deoxy-D-xylulose 5-phosphate from D-glyceraldehyde 3-phosphate and pyruvate: step 1/1. In terms of biological role, catalyzes the acyloin condensation reaction between C atoms 2 and 3 of pyruvate and glyceraldehyde 3-phosphate to yield 1-deoxy-D-xylulose-5-phosphate (DXP). This is 1-deoxy-D-xylulose-5-phosphate synthase from Proteus mirabilis (strain HI4320).